A 120-amino-acid chain; its full sequence is Large ribosomal subunit protein P3y (120 aa).

Positions 81–92 are enriched in gly residues; that stretch reads GGAAAGGGGGGE. The interval 81-120 is disordered; the sequence is GGAAAGGGGGGEAAAATKEEEKKKEESEEEEGDFGFDLFG. The span at 97-106 shows a compositional bias: basic and acidic residues; sequence TKEEEKKKEE.

It belongs to the eukaryotic ribosomal protein P1/P2 family.

Functionally, plays an important role in the elongation step of protein synthesis. The protein is Large ribosomal subunit protein P3y (RPP3B) of Arabidopsis thaliana (Mouse-ear cress).